Reading from the N-terminus, the 30-residue chain is Photosystem I reaction center subunit XII (30 aa).

The helical transmembrane segment at 6–26 (VFTILAIALVPAVMAALLGSA) threads the bilayer.

The protein belongs to the PsaM family.

The protein localises to the cellular thylakoid membrane. The chain is Photosystem I reaction center subunit XII from Synechococcus sp. (strain JA-3-3Ab) (Cyanobacteria bacterium Yellowstone A-Prime).